Consider the following 1009-residue polypeptide: Type VII secretion system accessory factor EsaA (1009 aa).

Residues 7-27 (IYALIVTLIIIIAIVSMIFFV) form a helical membrane-spanning segment. Residues 680–697 (TFAEEPQEPKIDKGKNDE) show a composition bias toward basic and acidic residues. Positions 680–707 (TFAEEPQEPKIDKGKNDEFNTMSSNLDK) are disordered. A run of 5 helical transmembrane segments spans residues 822-842 (ISPTLFVLLMYLLSMITAYIF), 869-889 (VITSGVIGTTGLVEGLIVGLI), 903-923 (KFILMVILTMMVFVLINTYLL), 928-948 (SIGMFLMIAALGLYFVAMNNL), and 979-999 (IGLVLVILTVLVIIGFVLNMF).

Belongs to the EsaA family. Homodimer. Interacts with EssB.

Its subcellular location is the cell membrane. Component of the type VII secretion system (Ess). Provides together with EssB and other components such as EssC and EssE a secretion plateform accross the cytoplasmic membrane in the host. The protein is Type VII secretion system accessory factor EsaA of Staphylococcus aureus (strain USA300).